A 1769-amino-acid polypeptide reads, in one-letter code: Gamma-tubulin complex component 6 (1769 aa).

Disordered regions lie at residues 809–842 (EAQQ…HSCD), 859–881 (STPS…PFST), and 1284–1360 (TVCS…AEAR). Residues 820-831 (FPSTGSQVTSTG) are compositionally biased toward polar residues. Positions 1314 to 1326 (PEEKGPGKSRDAE) are enriched in basic and acidic residues. The span at 1332 to 1343 (LPSSSQEDTAVP) shows a compositional bias: polar residues.

It belongs to the TUBGCP family. In terms of assembly, component of the gamma-tubulin ring complex (gTuRC) consisting of TUBGCP2, TUBGCP3, TUBGCP4, TUBGCP5 and TUBGCP6 and gamma-tubulin TUBG1 or TUBG2. TUBGCP2, TUBGCP3, TUBGCP4, TUBGCP5 and TUBGCP6 assemble in a 5:5:2:1:1 stoichiometry; each is associated with a gamma-tubulin, thereby arranging 14 gamma-tubulins in a helical manner. Gamma-tubulin at the first position is blocked by TUBGCP3 at the last position, allowing 13 protafilaments to grow into a microtubule. The gTuRC (via TUBGCP3 and TUBGCP6) interacts with ACTB and MZT1; the interactions form a luminal bridge that stabilizes the initial structure during complex assembly. The gTuRC (via TUBGCP2) interacts with MZT2A/MZT2B and CDK5RAP2 (via CM1 motif); the interactions play a role in gTuRC activation.

It is found in the cytoplasm. Its subcellular location is the cytoskeleton. The protein resides in the microtubule organizing center. It localises to the centrosome. Component of the gamma-tubulin ring complex (gTuRC) which mediates microtubule nucleation. The gTuRC regulates the minus-end nucleation of alpha-beta tubulin heterodimers that grow into microtubule protafilaments, a critical step in centrosome duplication and spindle formation. This Mus musculus (Mouse) protein is Gamma-tubulin complex component 6 (Tubgcp6).